Consider the following 70-residue polypeptide: Waprin-Thr1 (70 aa).

A signal peptide spans 1–19 (MKARLLLLSVVILVGMVSA). In terms of domain architecture, WAP spans 20-70 (ENEKAGSCPDVNQPIPPLGLCRNMCESDSGCPNNEKCCKNGCGFMTCSRPR). Intrachain disulfides connect cysteine 27/cysteine 57, cysteine 40/cysteine 61, cysteine 44/cysteine 56, and cysteine 50/cysteine 66.

This sequence belongs to the venom waprin family. Expressed by the venom gland.

Its subcellular location is the secreted. In terms of biological role, damages membranes of susceptible bacteria. Has no hemolytic activity. Not toxic to mice. Does not inhibit the proteinases elastase and cathepsin G. The chain is Waprin-Thr1 from Thrasops jacksonii (Jackson's black tree snake).